A 111-amino-acid chain; its full sequence is MEVQAKLKFARISAQKCRLVADQIRGLPVEQAINLLTFSNKKAAVLIKGVLNSAVANAEHNDGMDVDSLVVSTIFVDEGPTMKRFEARAKGRGNRILKRTSHITVKVAEKK.

Belongs to the universal ribosomal protein uL22 family. In terms of assembly, part of the 50S ribosomal subunit.

This protein binds specifically to 23S rRNA; its binding is stimulated by other ribosomal proteins, e.g. L4, L17, and L20. It is important during the early stages of 50S assembly. It makes multiple contacts with different domains of the 23S rRNA in the assembled 50S subunit and ribosome. In terms of biological role, the globular domain of the protein is located near the polypeptide exit tunnel on the outside of the subunit, while an extended beta-hairpin is found that lines the wall of the exit tunnel in the center of the 70S ribosome. The sequence is that of Large ribosomal subunit protein uL22 from Francisella tularensis subsp. tularensis (strain FSC 198).